The chain runs to 184 residues: GTP cyclohydrolase 1 (184 aa).

Residues Cys-75, His-78, and Cys-146 each coordinate Zn(2+).

The protein belongs to the GTP cyclohydrolase I family. As to quaternary structure, toroid-shaped homodecamer, composed of two pentamers of five dimers.

The enzyme catalyses GTP + H2O = 7,8-dihydroneopterin 3'-triphosphate + formate + H(+). Its pathway is cofactor biosynthesis; 7,8-dihydroneopterin triphosphate biosynthesis; 7,8-dihydroneopterin triphosphate from GTP: step 1/1. The protein is GTP cyclohydrolase 1 of Streptococcus sanguinis (strain SK36).